A 269-amino-acid polypeptide reads, in one-letter code: Tryptophan synthase alpha chain (269 aa).

Residues glutamate 45 and aspartate 56 each act as proton acceptor in the active site.

It belongs to the TrpA family. In terms of assembly, tetramer of two alpha and two beta chains.

The catalysed reaction is (1S,2R)-1-C-(indol-3-yl)glycerol 3-phosphate + L-serine = D-glyceraldehyde 3-phosphate + L-tryptophan + H2O. Its pathway is amino-acid biosynthesis; L-tryptophan biosynthesis; L-tryptophan from chorismate: step 5/5. In terms of biological role, the alpha subunit is responsible for the aldol cleavage of indoleglycerol phosphate to indole and glyceraldehyde 3-phosphate. This is Tryptophan synthase alpha chain from Shouchella clausii (strain KSM-K16) (Alkalihalobacillus clausii).